The chain runs to 427 residues: Glutamate-1-semialdehyde 2,1-aminomutase (427 aa).

Residue Lys268 is modified to N6-(pyridoxal phosphate)lysine.

The protein belongs to the class-III pyridoxal-phosphate-dependent aminotransferase family. HemL subfamily. Requires pyridoxal 5'-phosphate as cofactor.

It localises to the cytoplasm. It catalyses the reaction (S)-4-amino-5-oxopentanoate = 5-aminolevulinate. It participates in porphyrin-containing compound metabolism; protoporphyrin-IX biosynthesis; 5-aminolevulinate from L-glutamyl-tRNA(Glu): step 2/2. The protein is Glutamate-1-semialdehyde 2,1-aminomutase of Methanococcus maripaludis (strain C7 / ATCC BAA-1331).